Here is a 335-residue protein sequence, read N- to C-terminus: tRNA N6-adenosine threonylcarbamoyltransferase (335 aa).

A divalent metal cation contacts are provided by H109, H113, and Y130. Substrate is bound by residues 130–134, D162, G177, E181, and N266; that span reads YVSGG. Residue D294 coordinates a divalent metal cation.

Belongs to the KAE1 / TsaD family. In terms of assembly, component of the EKC/KEOPS complex composed of at least GON7, TP53RK, TPRKB, OSGEP and LAGE3; the whole complex dimerizes. It depends on a divalent metal cation as a cofactor.

It is found in the cytoplasm. Its subcellular location is the nucleus. The enzyme catalyses L-threonylcarbamoyladenylate + adenosine(37) in tRNA = N(6)-L-threonylcarbamoyladenosine(37) in tRNA + AMP + H(+). Its function is as follows. Component of the EKC/KEOPS complex that is required for the formation of a threonylcarbamoyl group on adenosine at position 37 (t(6)A37) in tRNAs that read codons beginning with adenine. The complex is probably involved in the transfer of the threonylcarbamoyl moiety of threonylcarbamoyl-AMP (TC-AMP) to the N6 group of A37. OSGEP likely plays a direct catalytic role in this reaction, but requires other protein(s) of the complex to fulfill this activity. The protein is tRNA N6-adenosine threonylcarbamoyltransferase of Bos taurus (Bovine).